Reading from the N-terminus, the 276-residue chain is MIVIGRSIVHPYITNEYEPFAAEKQQILSIMAGNQEVYSFRTADELSFDLNLRVNIITSALELFQSGFQFRTFQQSFCNPQFWERTSLGGFQLLPNIAPSIAIQDIFKNGKLYGTECATAMIIIFYKALLSLYEEKTFNRLFANLLLYTWDYDRDLKLITKTSGDIVPGDLVYFKNPQVNPATIEWQGENAIYLGNFFFYGHGVGVKTKEEIIYSLNERRIPYAFISAYLTDFITRIDSRMMSQYAPPNTPQTSIGFIPIRDDAIVATVGHTTTIY.

The protein belongs to the bacillus TGase family.

The catalysed reaction is L-glutaminyl-[protein] + L-lysyl-[protein] = [protein]-L-lysyl-N(6)-5-L-glutamyl-[protein] + NH4(+). Probably plays a role in the assembly of the spore coat proteins by catalyzing epsilon-(gamma-glutamyl)lysine cross-links. This is Protein-glutamine gamma-glutamyltransferase from Bacillus mycoides (strain KBAB4) (Bacillus weihenstephanensis).